We begin with the raw amino-acid sequence, 421 residues long: Serine hydroxymethyltransferase (421 aa).

(6S)-5,6,7,8-tetrahydrofolate is bound by residues leucine 121 and 125-127 (GHL). Lysine 229 carries the post-translational modification N6-(pyridoxal phosphate)lysine.

The protein belongs to the SHMT family. In terms of assembly, homodimer. The cofactor is pyridoxal 5'-phosphate.

Its subcellular location is the cytoplasm. The catalysed reaction is (6R)-5,10-methylene-5,6,7,8-tetrahydrofolate + glycine + H2O = (6S)-5,6,7,8-tetrahydrofolate + L-serine. Its pathway is one-carbon metabolism; tetrahydrofolate interconversion. It participates in amino-acid biosynthesis; glycine biosynthesis; glycine from L-serine: step 1/1. Catalyzes the reversible interconversion of serine and glycine with tetrahydrofolate (THF) serving as the one-carbon carrier. This reaction serves as the major source of one-carbon groups required for the biosynthesis of purines, thymidylate, methionine, and other important biomolecules. Also exhibits THF-independent aldolase activity toward beta-hydroxyamino acids, producing glycine and aldehydes, via a retro-aldol mechanism. The chain is Serine hydroxymethyltransferase from Haemophilus influenzae (strain PittGG).